We begin with the raw amino-acid sequence, 686 residues long: Rhophilin-2 (686 aa).

The 75-residue stretch at 26-100 (NPLAQTGRSK…LEGLNISVGV (75 aa)) folds into the REM-1 domain. The tract at residues 46 to 66 (QILKAVRMRTGAENLLKVATN) is interaction with Rho. Residues 111 to 460 (PLIPLGLKET…RLKYAQHQDD (350 aa)) enclose the BRO1 domain. The PDZ domain maps to 515 to 593 (RSIHFTAEEG…DGVEMKVVSL (79 aa)). Residue Thr655 is modified to Phosphothreonine.

This sequence belongs to the RHPN family. In terms of assembly, interacts with GTP-bound RhoA and RhoB. Interacts with both GTP- and GDP-bound RhoA. Interacts with KRT18. In terms of tissue distribution, mainly expressed in thyroid.

Its subcellular location is the cytoplasm. The protein resides in the perinuclear region. Binds specifically to GTP-Rho. May function in a Rho pathway to limit stress fiber formation and/or increase the turnover of F-actin structures in the absence of high levels of RhoA activity. This Canis lupus familiaris (Dog) protein is Rhophilin-2 (RHPN2).